We begin with the raw amino-acid sequence, 184 residues long: Ribosome-recycling factor (184 aa).

The protein belongs to the RRF family.

It localises to the cytoplasm. In terms of biological role, responsible for the release of ribosomes from messenger RNA at the termination of protein biosynthesis. May increase the efficiency of translation by recycling ribosomes from one round of translation to another. The protein is Ribosome-recycling factor of Oleidesulfovibrio alaskensis (strain ATCC BAA-1058 / DSM 17464 / G20) (Desulfovibrio alaskensis).